The primary structure comprises 500 residues: Protein SLENDER RICE1-LIKE 2 (500 aa).

The GRAS domain occupies 68-454 (KELEKMALRS…QRLYSASAWR (387 aa)). Residues 75–135 (LRSVNLMVTC…DALAERLFPA (61 aa)) form a leucine repeat I (LRI) region. The segment at 154–219 (FRGFYEAGPY…GGPPFLRITG (66 aa)) is VHIID. The VHIID motif lies at 185–189 (VHVID). Positions 233–265 (DVGLRLAEFARSCSVPFAFRGIAADQLDGLRPW) are leucine repeat II (LRII). Residues 275-376 (VAINSVLQLH…EAYLQGEIAD (102 aa)) form a PFYRE region. The LXXLL motif motif lies at 283–287 (LHRLL). The tract at residues 379-454 (SREGSSRVER…QRLYSASAWR (76 aa)) is SAW. Positions 466–500 (SGAADAMEESQNSNTNGGGGGSSGGGHGALNQIMQ) are disordered. Residues 481-493 (NGGGGGSSGGGHG) are compositionally biased toward gly residues.

Belongs to the GRAS family. Expressed at low levels in leaf blades, leaf sheaths, rachis and flowers. Expressed in the embryo of immature seeds.

It is found in the nucleus. Probable transcriptional regulator that acts as a repressor of the gibberellin (GA) signaling pathway. Its repressive activity is weaker than that of SLR1. Its overexpression prevents the GA signaling pathway and induces a dwarf phenotype in Arabidopsis thaliana plants. This chain is Protein SLENDER RICE1-LIKE 2, found in Oryza sativa subsp. japonica (Rice).